Consider the following 37-residue polypeptide: Large ribosomal subunit protein bL36 (37 aa).

It belongs to the bacterial ribosomal protein bL36 family.

The chain is Large ribosomal subunit protein bL36 from Campylobacter jejuni subsp. jejuni serotype O:6 (strain 81116 / NCTC 11828).